A 125-amino-acid polypeptide reads, in one-letter code: Small ribosomal subunit protein uS17 (125 aa).

Disordered regions lie at residues 1–21 (MSSS…VSSR) and 101–125 (VAAQ…APQA).

Belongs to the universal ribosomal protein uS17 family. In terms of assembly, part of the 30S ribosomal subunit.

One of the primary rRNA binding proteins, it binds specifically to the 5'-end of 16S ribosomal RNA. This Opitutus terrae (strain DSM 11246 / JCM 15787 / PB90-1) protein is Small ribosomal subunit protein uS17.